The sequence spans 285 residues: Probable endonuclease 4 (285 aa).

Zn(2+) is bound by residues His-69, His-109, Glu-145, Asp-179, His-182, His-216, Asp-229, His-231, and Glu-261.

This sequence belongs to the AP endonuclease 2 family. It depends on Zn(2+) as a cofactor.

The enzyme catalyses Endonucleolytic cleavage to 5'-phosphooligonucleotide end-products.. In terms of biological role, endonuclease IV plays a role in DNA repair. It cleaves phosphodiester bonds at apurinic or apyrimidinic (AP) sites, generating a 3'-hydroxyl group and a 5'-terminal sugar phosphate. This chain is Probable endonuclease 4, found in Salmonella heidelberg (strain SL476).